We begin with the raw amino-acid sequence, 122 residues long: Large ribosomal subunit protein uL14 (122 aa).

The protein belongs to the universal ribosomal protein uL14 family. In terms of assembly, part of the 50S ribosomal subunit. Forms a cluster with proteins L3 and L19. In the 70S ribosome, L14 and L19 interact and together make contacts with the 16S rRNA in bridges B5 and B8.

In terms of biological role, binds to 23S rRNA. Forms part of two intersubunit bridges in the 70S ribosome. This is Large ribosomal subunit protein uL14 from Limosilactobacillus reuteri (strain DSM 20016) (Lactobacillus reuteri).